We begin with the raw amino-acid sequence, 183 residues long: Anterior gradient protein 1 (183 aa).

The first 18 residues, 1–18 (MQAGLSLVCLVLLCSALG), serve as a signal peptide directing secretion.

It belongs to the AGR family. As to expression, from stage 18 (neurula) onward, expressed in the cement gland until it degenerates. More weakly expressed in the adjacent hatching gland.

Its subcellular location is the secreted. In terms of biological role, does not appear to be required for cement gland formation. This Xenopus laevis (African clawed frog) protein is Anterior gradient protein 1 (ag1).